The chain runs to 49 residues: Large ribosomal subunit protein bL32 (49 aa).

The tract at residues 25-49 (AKPVKDKDGTYKLPHHINPTTGEYK) is disordered.

Belongs to the bacterial ribosomal protein bL32 family.

The polypeptide is Large ribosomal subunit protein bL32 (Sulfurimonas denitrificans (strain ATCC 33889 / DSM 1251) (Thiomicrospira denitrificans (strain ATCC 33889 / DSM 1251))).